The primary structure comprises 149 residues: Deoxyuridine 5'-triphosphate nucleotidohydrolase (149 aa).

Residues 68–70 (RSG), Asn-81, and 85–87 (LID) contribute to the substrate site.

Belongs to the dUTPase family. Mg(2+) serves as cofactor.

The enzyme catalyses dUTP + H2O = dUMP + diphosphate + H(+). The protein operates within pyrimidine metabolism; dUMP biosynthesis; dUMP from dCTP (dUTP route): step 2/2. Its function is as follows. This enzyme is involved in nucleotide metabolism: it produces dUMP, the immediate precursor of thymidine nucleotides and it decreases the intracellular concentration of dUTP so that uracil cannot be incorporated into DNA. The sequence is that of Deoxyuridine 5'-triphosphate nucleotidohydrolase from Laribacter hongkongensis (strain HLHK9).